A 302-amino-acid polypeptide reads, in one-letter code: Glutaminase (302 aa).

Ser61, Asn111, Glu155, Asn162, Tyr186, Tyr238, and Val256 together coordinate substrate.

The protein belongs to the glutaminase family. In terms of assembly, homotetramer.

It catalyses the reaction L-glutamine + H2O = L-glutamate + NH4(+). This is Glutaminase from Pseudomonas putida (strain ATCC 700007 / DSM 6899 / JCM 31910 / BCRC 17059 / LMG 24140 / F1).